The following is a 138-amino-acid chain: Large ribosomal subunit protein uL16 (138 aa).

Residues M1–Q13 are compositionally biased toward basic residues. Positions M1–T22 are disordered.

It belongs to the universal ribosomal protein uL16 family. In terms of assembly, part of the 50S ribosomal subunit.

Functionally, binds 23S rRNA and is also seen to make contacts with the A and possibly P site tRNAs. The sequence is that of Large ribosomal subunit protein uL16 from Paraburkholderia phymatum (strain DSM 17167 / CIP 108236 / LMG 21445 / STM815) (Burkholderia phymatum).